Consider the following 424-residue polypeptide: Histidine--tRNA ligase (424 aa).

Belongs to the class-II aminoacyl-tRNA synthetase family. Homodimer.

It localises to the cytoplasm. The catalysed reaction is tRNA(His) + L-histidine + ATP = L-histidyl-tRNA(His) + AMP + diphosphate + H(+). The polypeptide is Histidine--tRNA ligase (Shigella sonnei (strain Ss046)).